The following is a 380-amino-acid chain: Cytochrome b (380 aa).

Transmembrane regions (helical) follow at residues 34–54 (FGSL…FLAM), 78–99 (WLLR…YFHI), 114–134 (WYTG…GYIL), and 179–199 (FFTL…IHLL). 2 residues coordinate heme b: His84 and His98. Residues His183 and His197 each contribute to the heme b site. His202 contacts a ubiquinone. 4 consecutive transmembrane segments (helical) span residues 227 to 247 (YKDL…TLFL), 289 to 309 (LGGV…PTLH), 321 to 341 (FTQI…WIGA), and 348 to 368 (FIMI…LLIP).

Belongs to the cytochrome b family. The cytochrome bc1 complex contains 3 respiratory subunits (MT-CYB, CYC1 and UQCRFS1), 2 core proteins (UQCRC1 and UQCRC2) and probably 6 low-molecular weight proteins. Heme b serves as cofactor.

It localises to the mitochondrion inner membrane. In terms of biological role, component of the ubiquinol-cytochrome c reductase complex (complex III or cytochrome b-c1 complex) that is part of the mitochondrial respiratory chain. The b-c1 complex mediates electron transfer from ubiquinol to cytochrome c. Contributes to the generation of a proton gradient across the mitochondrial membrane that is then used for ATP synthesis. In Pelomedusa subrufa (African side-necked turtle), this protein is Cytochrome b (MT-CYB).